The sequence spans 505 residues: MTEQKYVVALDQGTTSSRAVVLDHDANIVSVSQREFTQIYPQAGWVEHDPMEIYATQSSTLVEALGKAGIRSDEVAAIGITNQRETTVVWNKETGKPVYNAIVWQCRRTAAICEELKERGLESYIRDNTGLVLDPYFSGTKIKWILDNVEGAREQAEAGQLLFGTVDTWLVWKMTQGRVHVTDYTNASRTMLFNINTLQWDEKILAEFNIPLSMMPEVKKSSEVYGQTNIGGKGGTRIPIAGIAGDQQAALYGQMCVQAGQAKNTYGTGCFLLMNTGQEKVTSHNGLLTTLACGPRGEPAYALEGAVFMGGASIQWLRDELKLISDARDSEYFATKVDTSNGVYVVPAFTGLGAPYWDAYARGTIVGLTRGVNSNHIIRATLESIAYQTRDVLDAMQADSGIKLSALRVDGGAVANNFLMQFQADVLDTEVHRPKVTEVTALGAAYLAGLAVGFWDGLEELQGKAEIDRSFKPHHDEEKRQRRYKGWKRAVKCAQAWAVLHNEEE.

Threonine 14 lines the ADP pocket. 3 residues coordinate ATP: threonine 14, threonine 15, and serine 16. Residue threonine 14 coordinates sn-glycerol 3-phosphate. Arginine 18 provides a ligand contact to ADP. The sn-glycerol 3-phosphate site is built by arginine 84, glutamate 85, tyrosine 136, and aspartate 246. The glycerol site is built by arginine 84, glutamate 85, tyrosine 136, aspartate 246, and glutamine 247. Positions 268 and 311 each coordinate ADP. Residues threonine 268, glycine 311, glutamine 315, and glycine 412 each coordinate ATP. 2 residues coordinate ADP: glycine 412 and asparagine 416.

The protein belongs to the FGGY kinase family.

The enzyme catalyses glycerol + ATP = sn-glycerol 3-phosphate + ADP + H(+). It participates in polyol metabolism; glycerol degradation via glycerol kinase pathway; sn-glycerol 3-phosphate from glycerol: step 1/1. Its activity is regulated as follows. Inhibited by fructose 1,6-bisphosphate (FBP). Functionally, key enzyme in the regulation of glycerol uptake and metabolism. Catalyzes the phosphorylation of glycerol to yield sn-glycerol 3-phosphate. The sequence is that of Glycerol kinase from Vibrio cholerae serotype O1 (strain ATCC 39315 / El Tor Inaba N16961).